A 450-amino-acid chain; its full sequence is Bestrophin homolog 1 (450 aa).

The Cytoplasmic portion of the chain corresponds to 1 to 31 (MTINYHKEIMTSHPWTFFLLLFKWKGSIWKA). A helical membrane pass occupies residues 32 to 51 (VYMETIIFLICYGIISVIYK). Topologically, residues 52-60 (TAMGESSQR) are extracellular. The chain crosses the membrane as a helical span at residues 61-82 (TFESLVRYFDKRLSYIPLEFVL). Topologically, residues 83–242 (GFFVTTVVNR…DWVPLPLMYP (160 aa)) are cytoplasmic. Residues 243-260 (QLVCLAVNLYFLVSIIAR) traverse the membrane as a helical segment. Over 261 to 278 (QLVIEKHKMVDEVDVYFP) the chain is Extracellular. Residues 279 to 292 (VMTFLQFIFYMGWL) traverse the membrane as a helical segment. The Cytoplasmic segment spans residues 293–450 (KVIDVMLNPF…WKIPTNPQKF (158 aa)). Residues asparagine 300, aspartate 305, and aspartate 308 each contribute to the Ca(2+) site.

The protein belongs to the anion channel-forming bestrophin (TC 1.A.46) family. Calcium-sensitive chloride channel subfamily. In terms of assembly, forms oligomers.

The protein resides in the cell membrane. It catalyses the reaction chloride(in) = chloride(out). Its function is as follows. Ligand-gated anion channel that allows the movement of chloride monoatomic anions across cell membranes when activated by Calcium (Ca2+). The sequence is that of Bestrophin homolog 1 (best-1) from Caenorhabditis elegans.